Consider the following 636-residue polypeptide: DNA mismatch repair protein MutL (636 aa).

Positions 362–393 (RKTPEVHEEAEKPEFLVKQEAKNSEEPKNETE) are disordered. The span at 363 to 393 (KTPEVHEEAEKPEFLVKQEAKNSEEPKNETE) shows a compositional bias: basic and acidic residues.

This sequence belongs to the DNA mismatch repair MutL/HexB family.

This protein is involved in the repair of mismatches in DNA. It is required for dam-dependent methyl-directed DNA mismatch repair. May act as a 'molecular matchmaker', a protein that promotes the formation of a stable complex between two or more DNA-binding proteins in an ATP-dependent manner without itself being part of a final effector complex. This chain is DNA mismatch repair protein MutL, found in Lactobacillus helveticus (strain DPC 4571).